The sequence spans 489 residues: Arginine biosynthesis bifunctional protein ArgJ 2, mitochondrial (489 aa).

The transit peptide at Met-1–His-11 directs the protein to the mitochondrion. Substrate-binding residues include Thr-205, Lys-234, Thr-245, Glu-341, and Asn-484. Thr-245 functions as the Nucleophile in the catalytic mechanism.

Belongs to the ArgJ family. As to quaternary structure, heterodimer of an alpha and a beta chain. In terms of processing, the alpha and beta chains are autoproteolytically processed from a single precursor protein within the mitochondrion.

The protein resides in the mitochondrion matrix. It carries out the reaction N(2)-acetyl-L-ornithine + L-glutamate = N-acetyl-L-glutamate + L-ornithine. The enzyme catalyses L-glutamate + acetyl-CoA = N-acetyl-L-glutamate + CoA + H(+). It participates in amino-acid biosynthesis; L-arginine biosynthesis; L-ornithine and N-acetyl-L-glutamate from L-glutamate and N(2)-acetyl-L-ornithine (cyclic): step 1/1. The protein operates within amino-acid biosynthesis; L-arginine biosynthesis; N(2)-acetyl-L-ornithine from L-glutamate: step 1/4. Functionally, catalyzes two activities which are involved in the cyclic version of arginine biosynthesis: the synthesis of acetylglutamate from glutamate and acetyl-CoA, and of ornithine by transacetylation between acetylornithine and glutamate. This chain is Arginine biosynthesis bifunctional protein ArgJ 2, mitochondrial, found in Sclerotinia sclerotiorum (strain ATCC 18683 / 1980 / Ss-1) (White mold).